We begin with the raw amino-acid sequence, 415 residues long: Diaminopimelate decarboxylase (415 aa).

Residue lysine 60 is modified to N6-(pyridoxal phosphate)lysine. Residues glycine 239 and 273 to 276 each bind pyridoxal 5'-phosphate; that span reads EPGR. Residues arginine 276, arginine 312, and tyrosine 316 each contribute to the substrate site. The active-site Proton donor is cysteine 342. Substrate-binding residues include glutamate 343 and tyrosine 370. Pyridoxal 5'-phosphate is bound at residue tyrosine 370.

It belongs to the Orn/Lys/Arg decarboxylase class-II family. LysA subfamily. In terms of assembly, homodimer. Pyridoxal 5'-phosphate is required as a cofactor.

It catalyses the reaction meso-2,6-diaminopimelate + H(+) = L-lysine + CO2. It participates in amino-acid biosynthesis; L-lysine biosynthesis via DAP pathway; L-lysine from DL-2,6-diaminopimelate: step 1/1. In terms of biological role, specifically catalyzes the decarboxylation of meso-diaminopimelate (meso-DAP) to L-lysine. The protein is Diaminopimelate decarboxylase of Pseudomonas aeruginosa (strain ATCC 15692 / DSM 22644 / CIP 104116 / JCM 14847 / LMG 12228 / 1C / PRS 101 / PAO1).